A 716-amino-acid chain; its full sequence is Leucine-rich repeat neuronal protein 1 (716 aa).

Residues 1–25 (MARLSTGKAACQVVLGLLITSLTES) form the signal peptide. The LRRNT domain occupies 26-72 (SILTSECPQLCVCEIRPWFTPQSTYREATTVDCNDLRLTRIPGNLSS). Over 26 to 631 (SILTSECPQL…DISDHETSTA (606 aa)) the chain is Extracellular. The N-linked (GlcNAc...) asparagine glycan is linked to N69. LRR repeat units follow at residues 73 to 95 (DTQVLLLQSNNIAKTVDELQQLF), 96 to 117 (NLTELDFSQNNFTNIKEVGLAN), 120 to 141 (QLTTLHLEENQISEMTDYCLQD), 144 to 165 (NLQELYINHNQISTISANAFSG), 168 to 189 (NLLRLHLNSNKLKVIDSRWFDS), 192 to 213 (NLEILMIGENPVIGILDMNFRP), 216 to 237 (NLRSLVLAGMYLTDVPGNALVG), 240 to 261 (SLESLSFYDNKLIKVPQLALQK), and 264 to 285 (NLKFLDLNKNPIHKIQEGDFKN). N96 and N117 each carry an N-linked (GlcNAc...) asparagine glycan. Residues 371–424 (NPLRCDCVIHWINSNKTNIRFMEPLSMFCAMPPEYRGQQVKEVLIQDSSEQCLP) enclose the LRRCT domain. N-linked (GlcNAc...) asparagine glycosylation occurs at N385. In terms of domain architecture, Ig-like C2-type spans 424-515 (PMISHDTFPN…GADTRVATIK (92 aa)). A disulfide bridge links C447 with C499. Residue N517 is glycosylated (N-linked (GlcNAc...) asparagine). One can recognise a Fibronectin type-III domain in the interval 525-619 (QVLKIYVKQT…VNVTTKTAAF (95 aa)). Residues 632–652 (LAAVMGSMFAVISLASIAIYI) traverse the membrane as a helical segment. Residues 653-716 (AKRFKRKNYH…VDTSRSYYMW (64 aa)) lie on the Cytoplasmic side of the membrane. Residues 692 to 716 (SDKDKDGSADTKPTQVDTSRSYYMW) are disordered. Positions 702-716 (TKPTQVDTSRSYYMW) are enriched in polar residues.

Expressed in brain.

It localises to the membrane. The chain is Leucine-rich repeat neuronal protein 1 (Lrrn1) from Mus musculus (Mouse).